Reading from the N-terminus, the 233-residue chain is Orotidine 5'-phosphate decarboxylase (233 aa).

Substrate is bound by residues Asp9, Lys31, 58–67 (DLKLHDIPNT), Thr120, Arg182, Gln191, Gly211, and Arg212. Lys60 acts as the Proton donor in catalysis.

This sequence belongs to the OMP decarboxylase family. Type 1 subfamily. In terms of assembly, homodimer.

The catalysed reaction is orotidine 5'-phosphate + H(+) = UMP + CO2. Its pathway is pyrimidine metabolism; UMP biosynthesis via de novo pathway; UMP from orotate: step 2/2. Functionally, catalyzes the decarboxylation of orotidine 5'-monophosphate (OMP) to uridine 5'-monophosphate (UMP). This is Orotidine 5'-phosphate decarboxylase from Listeria welshimeri serovar 6b (strain ATCC 35897 / DSM 20650 / CCUG 15529 / CIP 8149 / NCTC 11857 / SLCC 5334 / V8).